The following is a 106-amino-acid chain: Urease subunit beta (106 aa).

The protein belongs to the urease beta subunit family. In terms of assembly, heterotrimer of UreA (gamma), UreB (beta) and UreC (alpha) subunits. Three heterotrimers associate to form the active enzyme.

The protein resides in the cytoplasm. It catalyses the reaction urea + 2 H2O + H(+) = hydrogencarbonate + 2 NH4(+). It functions in the pathway nitrogen metabolism; urea degradation; CO(2) and NH(3) from urea (urease route): step 1/1. The polypeptide is Urease subunit beta (Citrobacter koseri (strain ATCC BAA-895 / CDC 4225-83 / SGSC4696)).